A 272-amino-acid polypeptide reads, in one-letter code: Sulfate transporter CysZ (272 aa).

A run of 4 helical transmembrane segments spans residues 29-49, 66-86, 148-168, and 219-239; these read FVIM…WLFI, WLSF…LLLF, IIAL…VPVL, and FVPV…TLMW.

The protein belongs to the CysZ family.

It is found in the cell inner membrane. In terms of biological role, high affinity, high specificity proton-dependent sulfate transporter, which mediates sulfate uptake. Provides the sulfur source for the cysteine synthesis pathway. This Haemophilus influenzae (strain ATCC 51907 / DSM 11121 / KW20 / Rd) protein is Sulfate transporter CysZ.